The chain runs to 307 residues: Acetyl-coenzyme A carboxylase carboxyl transferase subunit beta (307 aa).

The segment at 1 to 26 (MAMAEPQDPKKGDKKTAERRGGGWLS) is disordered. The segment covering 7–21 (QDPKKGDKKTAERRG) has biased composition (basic and acidic residues). Residues 45-307 (LWVKCPDTGE…LMMGRKRQAA (263 aa)) form the CoA carboxyltransferase N-terminal domain.

The protein belongs to the AccD/PCCB family. As to quaternary structure, acetyl-CoA carboxylase is a heterohexamer composed of biotin carboxyl carrier protein (AccB), biotin carboxylase (AccC) and two subunits each of ACCase subunit alpha (AccA) and ACCase subunit beta (AccD).

Its subcellular location is the cytoplasm. The catalysed reaction is N(6)-carboxybiotinyl-L-lysyl-[protein] + acetyl-CoA = N(6)-biotinyl-L-lysyl-[protein] + malonyl-CoA. The protein operates within lipid metabolism; malonyl-CoA biosynthesis; malonyl-CoA from acetyl-CoA: step 1/1. Its function is as follows. Component of the acetyl coenzyme A carboxylase (ACC) complex. Biotin carboxylase (BC) catalyzes the carboxylation of biotin on its carrier protein (BCCP) and then the CO(2) group is transferred by the transcarboxylase to acetyl-CoA to form malonyl-CoA. In Caulobacter vibrioides (strain ATCC 19089 / CIP 103742 / CB 15) (Caulobacter crescentus), this protein is Acetyl-coenzyme A carboxylase carboxyl transferase subunit beta.